A 189-amino-acid chain; its full sequence is Peptidyl-tRNA hydrolase (189 aa).

Y15 lines the tRNA pocket. The Proton acceptor role is filled by H20. Residues F66, N68, and N114 each contribute to the tRNA site.

Belongs to the PTH family. Monomer.

It localises to the cytoplasm. The catalysed reaction is an N-acyl-L-alpha-aminoacyl-tRNA + H2O = an N-acyl-L-amino acid + a tRNA + H(+). Its function is as follows. Hydrolyzes ribosome-free peptidyl-tRNAs (with 1 or more amino acids incorporated), which drop off the ribosome during protein synthesis, or as a result of ribosome stalling. Catalyzes the release of premature peptidyl moieties from peptidyl-tRNA molecules trapped in stalled 50S ribosomal subunits, and thus maintains levels of free tRNAs and 50S ribosomes. The chain is Peptidyl-tRNA hydrolase from Dichelobacter nodosus (strain VCS1703A).